Consider the following 629-residue polypeptide: Phosphomethylpyrimidine synthase (629 aa).

The interval 1 to 24 (MSTKPKNAAHLSESAQVDSGSVQP) is disordered. Residues 13–24 (ESAQVDSGSVQP) show a composition bias toward polar residues. Substrate contacts are provided by residues Asn233, Met262, Tyr291, His327, 347–349 (SRG), 388–391 (DGLR), and Glu427. His431 is a Zn(2+) binding site. Tyr454 serves as a coordination point for substrate. His495 serves as a coordination point for Zn(2+). Cys575, Cys578, and Cys583 together coordinate [4Fe-4S] cluster.

This sequence belongs to the ThiC family. Homodimer. [4Fe-4S] cluster is required as a cofactor.

It carries out the reaction 5-amino-1-(5-phospho-beta-D-ribosyl)imidazole + S-adenosyl-L-methionine = 4-amino-2-methyl-5-(phosphooxymethyl)pyrimidine + CO + 5'-deoxyadenosine + formate + L-methionine + 3 H(+). Its pathway is cofactor biosynthesis; thiamine diphosphate biosynthesis. In terms of biological role, catalyzes the synthesis of the hydroxymethylpyrimidine phosphate (HMP-P) moiety of thiamine from aminoimidazole ribotide (AIR) in a radical S-adenosyl-L-methionine (SAM)-dependent reaction. In Pseudomonas syringae pv. tomato (strain ATCC BAA-871 / DC3000), this protein is Phosphomethylpyrimidine synthase.